Here is a 139-residue protein sequence, read N- to C-terminus: Large ribosomal subunit protein uL16 (139 aa).

It belongs to the universal ribosomal protein uL16 family. Part of the 50S ribosomal subunit.

Binds 23S rRNA and is also seen to make contacts with the A and possibly P site tRNAs. The protein is Large ribosomal subunit protein uL16 of Crocosphaera subtropica (strain ATCC 51142 / BH68) (Cyanothece sp. (strain ATCC 51142)).